The chain runs to 280 residues: Shikimate dehydrogenase (NADP(+)) (280 aa).

Residues 18–20 (SRS) and Thr-65 contribute to the shikimate site. The active-site Proton acceptor is Lys-69. Residues Asn-90 and Asp-105 each coordinate shikimate. NADP(+)-binding positions include 131–135 (GAGGA), 154–159 (NRTRAR), and Ile-219. Residue Tyr-221 participates in shikimate binding. Residue Gly-242 coordinates NADP(+).

The protein belongs to the shikimate dehydrogenase family. As to quaternary structure, homodimer.

It catalyses the reaction shikimate + NADP(+) = 3-dehydroshikimate + NADPH + H(+). Its pathway is metabolic intermediate biosynthesis; chorismate biosynthesis; chorismate from D-erythrose 4-phosphate and phosphoenolpyruvate: step 4/7. Involved in the biosynthesis of the chorismate, which leads to the biosynthesis of aromatic amino acids. Catalyzes the reversible NADPH linked reduction of 3-dehydroshikimate (DHSA) to yield shikimate (SA). The polypeptide is Shikimate dehydrogenase (NADP(+)) (Methylocella silvestris (strain DSM 15510 / CIP 108128 / LMG 27833 / NCIMB 13906 / BL2)).